The primary structure comprises 333 residues: MDEKDRPKNLREEEEKPSEETKILISSLPWEIDYLGNKLFNYEGYWYSEDILQSIPNIHTGFQPQETDIILASFYKSGTTWLKALTFALVQRSKHSLEDHQHPLLHHNPHEIVPNLELDLYLKSSKPDLTKFLSSSSSSPRLFSTHMSLDPLQVPLKENLCKIVYVCRNVKDVMVSVWYFRQSKKITRAEDYSLEAIFESFCNGVTLHGPFWDHALSYWRGSLEDPKHFLFMRYEDLKAEPRTQVKRLAEFLDCPFTKEEEDSGSVDKILELCSLSNLRSVEINKTRTSSRVDFKSYFRKGQVGDWKSYMTPEMVDKIDMIIEEKLKGSGLKF.

Residue 76-81 coordinates 3'-phosphoadenylyl sulfate; it reads KSGTTW. H146 (proton acceptor) is an active-site residue. Residues R168, S176, Y234, and 299–301 each bind 3'-phosphoadenylyl sulfate; that span reads RKG.

Belongs to the sulfotransferase 1 family. Expressed in roots.

It is found in the cytoplasm. In terms of biological role, sulfotransferase that utilizes 3'-phospho-5'-adenylyl sulfate (PAPS) as sulfonate donor to specifically catalyze the sulfate conjugation of brassinosteroids, including castasterone (CS), brassinolide (BL), related 24-epimers, and the naturally occurring (22R, 23R)-28-homobrassinosteroids. No activity on phenolic acids, desulfo-glucosinolates, flavonoids, steroids, gibberellic acids, cytokinins, phenylpropanoids, hydroxyjasmonates and coumarins. This Arabidopsis thaliana (Mouse-ear cress) protein is Cytosolic sulfotransferase 10 (SOT10).